The chain runs to 511 residues: Neuronal acetylcholine receptor subunit alpha-2 (511 aa).

An N-terminal signal peptide occupies residues 1–27; that stretch reads MTLSHSALQFWTHLYLWCLLLVPAVLT. At 28-241 the chain is on the extracellular side; sequence QQGSHTHAED…VTYYFVIRRL (214 aa). N-linked (GlcNAc...) asparagine glycosylation is found at Asn56 and Asn106. The cysteines at positions 160 and 174 are disulfide-linked. Asn212 carries N-linked (GlcNAc...) asparagine glycosylation. Residues Cys224 and Cys225 are joined by a disulfide bond. 3 helical membrane passes run 242–266, 274–292, and 308–329; these read PLFYTINLIIPCLLISCLTVLVFYL, ITLCISVLLSLTVFLLLIT, and YLLFTMIFVTLSIVITVFVLNV. Over 330-484 the chain is Cytoplasmic; that stretch reads HHRSPSTHNM…WKYVAMVVDR (155 aa). Residues 485 to 503 traverse the membrane as a helical segment; sequence IFLWLFIIVCFLGTIGLFL.

This sequence belongs to the ligand-gated ion channel (TC 1.A.9) family. Acetylcholine receptor (TC 1.A.9.1) subfamily. Alpha-2/CHRNA2 sub-subfamily. In terms of assembly, neuronal AChR seems to be composed of two different types of subunits: alpha and non-alpha (beta). CHRNA2/Alpha-2 subunit can be combined to CHRNB2/beta-2 or CHRNB4/beta-4 to give rise to functional receptors. The alpha-2:beta-2 nAChR complex is proposed to be a heteropentamer with two subtypes: LS (low agonist sensitivity) with a (alpha-2)3:(beta-2)2 and HS (high agonist sensitivity) with a (alpha-2)2:(beta-2)3 stoichiometry; the subtypes differ in their subunit binding interfaces which are involved in ligand binding.

It is found in the synaptic cell membrane. The protein resides in the cell membrane. The catalysed reaction is Ca(2+)(in) = Ca(2+)(out). It carries out the reaction K(+)(in) = K(+)(out). The enzyme catalyses Na(+)(in) = Na(+)(out). Its function is as follows. Component of neuronal acetylcholine receptors (nAChRs) that function as pentameric, ligand-gated cation channels with high calcium permeability among other activities. nAChRs are excitatory neurotrasnmitter receptors formed by a collection of nAChR subunits known to mediate synaptic transmission in the nervous system and the neuromuscular junction. Each nAchR subunit confers differential attributes to channel properties, including activation, deactivation and desensitization kinetics, pH sensitivity, cation permeability, and binding to allosteric modulators. CHRNA2 forms heteropentameric neuronal acetylcholine receptors with CHRNB2 and CHRNB4 and plays a role in nicotine dependence. In Rattus norvegicus (Rat), this protein is Neuronal acetylcholine receptor subunit alpha-2 (Chrna2).